The sequence spans 939 residues: Dynamin-like GTPase MGM1, mitochondrial (939 aa).

A mitochondrion-targeting transit peptide spans 1–27 (MSAQLRAAAAITPAARRVISGPAAVRR). A helical membrane pass occupies residues 85–103 (FIRVPALFGGMMLGAVGWV). A compositionally biased stretch (gly residues) spans 170–183 (AGEGSGSGEGGPNG). A disordered region spans residues 170 to 196 (AGEGSGSGEGGPNGGPEPPRQSRAGAA). In terms of domain architecture, Dynamin-type G spans 249 to 522 (TVTLPSIVVI…LEQQMSSKLN (274 aa)). The G1 motif stretch occupies residues 259 to 266 (GSQSSGKS). Ser-262, Gly-264, Lys-265, Ser-266, Ser-267, and Gly-281 together coordinate GTP. Ser-266 is a Mg(2+) binding site. The tract at residues 285–287 (ITR) is G2 motif. Residues Thr-286 and Asp-359 each contribute to the Mg(2+) site. The tract at residues 359 to 362 (DLPG) is G3 motif. The segment at 427–430 (TKMD) is G4 motif. The GTP site is built by Lys-428, Asp-430, and Ser-457. Positions 456–459 (ISKL) are G5 motif. The interval 549-703 (SAESYLAASL…TSDGIEISLK (155 aa)) is stalk region. Positions 710–809 (DIQPNEWAQG…LSLRIQAAKS (100 aa)) are paddle region. The tract at residues 810–877 (RQCKTLTNKY…GGGLEKFARE (68 aa)) is stalk region. A disulfide bridge connects residues Cys-812 and Cys-821. The GED domain maps to 815-909 (LTNKYYCPEV…KIEELHRISS (95 aa)).

It belongs to the TRAFAC class dynamin-like GTPase superfamily. Dynamin/Fzo/YdjA family. In terms of assembly, oligomeric complex consisting of membrane-bound and soluble forms of MGM1. In terms of processing, cleavage of the transit peptide by mitochondrial processing protease (MPP) produces a long integral membrane form of MGM1 (L-MGM1). Further processing by the rhomboid protease PCP1 produces a short peripheral membrane form of MGM1 (S-MGM1). Both forms are required for full activity.

The protein resides in the mitochondrion inner membrane. The protein localises to the mitochondrion intermembrane space. It carries out the reaction GTP + H2O = GDP + phosphate + H(+). Functionally, dynamin-related GTPase that is essential for normal mitochondrial morphology by mediating fusion of the mitochondrial inner membranes, regulating cristae morphology and maintaining respiratory chain function. Exists in two forms: the transmembrane, long form (Dynamin-like GTPase MGM1, long form; L-MGM1), which is tethered to the inner mitochondrial membrane, and the short soluble form (Dynamin-like GTPase MGM1, short form; S-MGM1), which results from proteolytic cleavage and localizes in the intermembrane space. Both forms (L-MGM1 and S-MGM1) cooperate to catalyze the fusion of the mitochondrial inner membrane. The equilibrium between L-MGM1 and S-MGM1 is essential: excess levels of S-MGM1, following loss of mitochondrial membrane potential, lead to an impaired equilibrium between L-MGM1 and S-MGM1, inhibiting mitochondrial fusion. Plays a role in the maintenance and remodeling of mitochondrial cristae, some invaginations of the mitochondrial inner membrane that provide an increase in the surface area. Probably acts by forming helical filaments at the inside of inner membrane tubes with the shape and dimensions of crista junctions. In terms of biological role, constitutes the transmembrane long form (L-MGM1) that plays a central role in mitochondrial inner membrane fusion and cristae morphology. L-MGM1 and the soluble short form (S-MGM1) form higher-order helical assemblies that coordinate the fusion of mitochondrial inner membranes. Inner membrane-anchored L-MGM1 molecules initiate membrane remodeling by recruiting soluble S-MGM1 to rapidly polymerize into a flexible cylindrical scaffold encaging the mitochondrial inner membrane. Once at the membrane surface, the formation of S-MGM1 helices induce bilayer curvature. MGM1 dimerization through the paddle region, which inserts into cardiolipin-containing membrane, promotes GTP hydrolysis and the helical assembly of a flexible MGM1 lattice on the membrane, which drives membrane curvature and mitochondrial fusion. Its function is as follows. Constitutes the soluble short form (S-MGM1) generated by cleavage by PCP1, which plays a central role in mitochondrial inner membrane fusion and cristae morphology. The transmembrane long form (L-MGM1) and the S-MGM1 form higher-order helical assemblies that coordinate the fusion of mitochondrial inner membranes. Inner membrane-anchored L-MGM1 molecules initiate membrane remodeling by recruiting soluble S-MGM1 to rapidly polymerize into a flexible cylindrical scaffold encaging the mitochondrial inner membrane. Once at the membrane surface, the formation of S-MGM1 helices induce bilayer curvature. MGM1 dimerization through the paddle region, which inserts into cardiolipin-containing membrane, promotes GTP hydrolysis and the helical assembly of a flexible MGM1 lattice on the membrane, which drives membrane curvature and mitochondrial fusion. Excess levels of S-MGM1 produced by cleavage by PCP1 following stress conditions that induce loss of mitochondrial membrane potential, lead to an impaired equilibrium between L-MGM1 and S-MGM1, thereby inhibiting mitochondrial fusion. The chain is Dynamin-like GTPase MGM1, mitochondrial from Chaetomium thermophilum (strain DSM 1495 / CBS 144.50 / IMI 039719) (Thermochaetoides thermophila).